Consider the following 339-residue polypeptide: MGYIKFQKDRKFEIVPIGRVAIDFNPIDINRPLSESKTFKKYLGGSPANIAVGLSRLGKKVGFIGKVSKDQFGKFVVDYFDNEGIDTSQIKYAENGESLGLTFTEIASPTESSILMYRNGIADLELDVNEIDEEYIKNTKAIVISGTALAKSPSREAALKALELAKKNDTIVIFDVDYREYNWKNKDEIAIYYSIVGKQSDIVMGSREEFDLMESLIVKEKSTDEESAKRWLGFGNKIVVIKHGKEGSTAYTNDRKSYKIKPFPVKLLKSFGGGDAYASAFIYGILEEWDIMDALEFGSASAAMLVASHSCSEDMPTVKEINEFIKEKKEQYGEMIARG.

Belongs to the carbohydrate kinase PfkB family.

It catalyses the reaction 5-dehydro-2-deoxy-D-gluconate + ATP = 6-phospho-5-dehydro-2-deoxy-D-gluconate + ADP + H(+). Its pathway is polyol metabolism; myo-inositol degradation into acetyl-CoA; acetyl-CoA from myo-inositol: step 5/7. Its function is as follows. Catalyzes the phosphorylation of 5-dehydro-2-deoxy-D-gluconate (2-deoxy-5-keto-D-gluconate or DKG) to 6-phospho-5-dehydro-2-deoxy-D-gluconate (DKGP). The polypeptide is 5-dehydro-2-deoxygluconokinase (Clostridium botulinum (strain Eklund 17B / Type B)).